Here is a 230-residue protein sequence, read N- to C-terminus: PKHD-type hydroxylase XF_0598 (230 aa).

Residues arginine 78–serine 182 form the Fe2OG dioxygenase domain. Fe cation-binding residues include histidine 96, aspartate 98, and histidine 163. Position 173 (arginine 173) interacts with 2-oxoglutarate.

Requires Fe(2+) as cofactor. L-ascorbate serves as cofactor.

The polypeptide is PKHD-type hydroxylase XF_0598 (Xylella fastidiosa (strain 9a5c)).